Here is a 137-residue protein sequence, read N- to C-terminus: ATP synthase epsilon chain 1 (137 aa).

Belongs to the ATPase epsilon chain family. In terms of assembly, F-type ATPases have 2 components, CF(1) - the catalytic core - and CF(0) - the membrane proton channel. CF(1) has five subunits: alpha(3), beta(3), gamma(1), delta(1), epsilon(1). CF(0) has three main subunits: a, b and c.

Its subcellular location is the cell inner membrane. Functionally, produces ATP from ADP in the presence of a proton gradient across the membrane. The sequence is that of ATP synthase epsilon chain 1 (atpC1) from Ralstonia nicotianae (strain ATCC BAA-1114 / GMI1000) (Ralstonia solanacearum).